The primary structure comprises 161 residues: Large ribosomal subunit protein uL16 (161 aa).

It belongs to the universal ribosomal protein uL16 family.

This chain is Large ribosomal subunit protein uL16, found in Methanosphaera stadtmanae (strain ATCC 43021 / DSM 3091 / JCM 11832 / MCB-3).